Reading from the N-terminus, the 1241-residue chain is Intraflagellar transport protein 122 homolog (1241 aa).

WD repeat units lie at residues 10 to 50, 51 to 91, 93 to 129, and 131 to 169; these read KAEH…QPLK, GHKD…LKYT, NDAI…VSKH, and SSSK…KVKI. A disordered region spans residues 222 to 246; sequence VYSSQGSEAEEEEPEEEDDSPRDDN. Residues 229–242 are compositionally biased toward acidic residues; it reads EAEEEEPEEEDDSP. WD repeat units follow at residues 278 to 317, 319 to 359, and 512 to 551; these read ALNF…LGTV, EQNS…HGLY, and KQAT…LLFQ.

As to quaternary structure, component of the IFT complex A (IFT-A) complex. IFT-A complex is divided into a core subcomplex composed of IFT122:IFT140:WDR19 which is associated with TULP3 and a peripheral subcomplex composed of IFT43:WDR35:TTC21B. Interacts with IFT43:WDR35; the interaction connects the 2 IFT-A subcomplexes. Interacts with IFTAP; the interaction associates IFTAP with IFT-A complex. As to expression, expressed in many tissues. Predominant expression in testis and pituitary.

It localises to the cell projection. Its subcellular location is the cilium. The protein resides in the cytoplasm. It is found in the cytoskeleton. The protein localises to the cilium basal body. As a component of the IFT complex A (IFT-A), a complex required for retrograde ciliary transport and entry into cilia of G protein-coupled receptors (GPCRs), it is required in ciliogenesis and ciliary protein trafficking. Involved in cilia formation during neuronal patterning. Acts as a negative regulator of Shh signaling. Required to recruit TULP3 to primary cilia. The sequence is that of Intraflagellar transport protein 122 homolog from Homo sapiens (Human).